The primary structure comprises 166 residues: Interleukin-2 (166 aa).

Positions 1-20 (MYSMQLASCVTLTLVLLVNS) are cleaved as a signal peptide. A glycan (O-linked (GalNAc...) threonine) is linked at threonine 23. An intrachain disulfide couples cysteine 89 to cysteine 137.

This sequence belongs to the IL-2 family.

It localises to the secreted. Cytokine produced by activated CD4-positive helper T-cells and to a lesser extend activated CD8-positive T-cells and natural killer (NK) cells that plays pivotal roles in the immune response and tolerance. Binds to a receptor complex composed of either the high-affinity trimeric IL-2R (IL2RA/CD25, IL2RB/CD122 and IL2RG/CD132) or the low-affinity dimeric IL-2R (IL2RB and IL2RG). Interaction with the receptor leads to oligomerization and conformation changes in the IL-2R subunits resulting in downstream signaling starting with phosphorylation of JAK1 and JAK3. In turn, JAK1 and JAK3 phosphorylate the receptor to form a docking site leading to the phosphorylation of several substrates including STAT5. This process leads to activation of several pathways including STAT, phosphoinositide-3-kinase/PI3K and mitogen-activated protein kinase/MAPK pathways. Functions as a T-cell growth factor and can increase NK-cell cytolytic activity as well. Promotes strong proliferation of activated B-cells and subsequently immunoglobulin production. Plays a pivotal role in regulating the adaptive immune system by controlling the survival and proliferation of regulatory T-cells, which are required for the maintenance of immune tolerance. Moreover, participates in the differentiation and homeostasis of effector T-cell subsets, including Th1, Th2, Th17 as well as memory CD8-positive T-cells. This Mus spretus (Western Mediterranean mouse) protein is Interleukin-2 (Il2).